Consider the following 206-residue polypeptide: Small ribosomal subunit protein uS4 (206 aa).

An S4 RNA-binding domain is found at 96 to 158; the sequence is GRLDNVVYRM…AKQQSRIKAA (63 aa).

Belongs to the universal ribosomal protein uS4 family. As to quaternary structure, part of the 30S ribosomal subunit. Contacts protein S5. The interaction surface between S4 and S5 is involved in control of translational fidelity.

One of the primary rRNA binding proteins, it binds directly to 16S rRNA where it nucleates assembly of the body of the 30S subunit. In terms of biological role, with S5 and S12 plays an important role in translational accuracy. This Vibrio atlanticus (strain LGP32) (Vibrio splendidus (strain Mel32)) protein is Small ribosomal subunit protein uS4.